The chain runs to 121 residues: MSTNKRRTIQIEITEEHFKDLEKALEALKGTQLPFSTTVEQFVELILSNYVATSNKISNLAESGFDVASIQQELEKIGSAAGADDALKSFLDELLKTSQKSFSNTKDGKKNDDDNNSSSKS.

A disordered region spans residues 100 to 121 (KSFSNTKDGKKNDDDNNSSSKS).

This is an uncharacterized protein from Mycoplasma pneumoniae (strain ATCC 29342 / M129 / Subtype 1) (Mycoplasmoides pneumoniae).